Consider the following 436-residue polypeptide: UPF0597 protein YhaM (436 aa).

The protein belongs to the UPF0597 family.

The protein is UPF0597 protein YhaM of Shigella boydii serotype 4 (strain Sb227).